The following is a 241-amino-acid chain: Ribosomal RNA small subunit methyltransferase G (241 aa).

S-adenosyl-L-methionine-binding positions include Gly79, Phe84, 130–131 (AE), and Arg150.

Belongs to the methyltransferase superfamily. RNA methyltransferase RsmG family.

It localises to the cytoplasm. In terms of biological role, specifically methylates the N7 position of a guanine in 16S rRNA. The chain is Ribosomal RNA small subunit methyltransferase G from Limosilactobacillus reuteri (strain DSM 20016) (Lactobacillus reuteri).